A 244-amino-acid chain; its full sequence is 2,5-diamino-6-ribosylamino-4(3H)-pyrimidinone 5'-phosphate reductase (244 aa).

Residues Thr-79, Asp-83, Val-159, and 182–186 (GANVI) each bind NADP(+).

This sequence belongs to the HTP reductase family. In terms of assembly, homodimer.

It catalyses the reaction 2,5-diamino-6-(1-D-ribitylamino)pyrimidin-4(3H)-one 5'-phosphate + NADP(+) = 2,5-diamino-6-(1-D-ribosylamino)pyrimidin-4(3H)-one 5'-phosphate + NADPH + H(+). It carries out the reaction 2,5-diamino-6-(1-D-ribitylamino)pyrimidin-4(3H)-one 5'-phosphate + NAD(+) = 2,5-diamino-6-(1-D-ribosylamino)pyrimidin-4(3H)-one 5'-phosphate + NADH + H(+). Its pathway is cofactor biosynthesis; riboflavin biosynthesis. Its function is as follows. Catalyzes an early step in riboflavin biosynthesis, the NADPH-dependent reduction of the ribose side chain of 2,5-diamino-6-ribosylamino-4(3H)-pyrimidinone 5'-phosphate, yielding 2,5-diamino-6-ribitylamino-4(3H)-pyrimidinone 5'-phosphate. This Saccharomyces cerevisiae (strain ATCC 204508 / S288c) (Baker's yeast) protein is 2,5-diamino-6-ribosylamino-4(3H)-pyrimidinone 5'-phosphate reductase (RIB7).